Reading from the N-terminus, the 595-residue chain is Aspartate--tRNA(Asp/Asn) ligase (595 aa).

Glu174 contacts L-aspartate. Residues 198-201 are aspartate; sequence QLFK. Arg220 is a binding site for L-aspartate. ATP-binding positions include 220–222 and Gln229; that span reads RDE. Residue His456 participates in L-aspartate binding. Glu486 is an ATP binding site. Arg493 is a binding site for L-aspartate. Position 538–541 (538–541) interacts with ATP; the sequence is GFDR.

This sequence belongs to the class-II aminoacyl-tRNA synthetase family. Type 1 subfamily. Homodimer.

It is found in the cytoplasm. The enzyme catalyses tRNA(Asx) + L-aspartate + ATP = L-aspartyl-tRNA(Asx) + AMP + diphosphate. Its function is as follows. Aspartyl-tRNA synthetase with relaxed tRNA specificity since it is able to aspartylate not only its cognate tRNA(Asp) but also tRNA(Asn). Reaction proceeds in two steps: L-aspartate is first activated by ATP to form Asp-AMP and then transferred to the acceptor end of tRNA(Asp/Asn). This is Aspartate--tRNA(Asp/Asn) ligase from Gloeobacter violaceus (strain ATCC 29082 / PCC 7421).